Reading from the N-terminus, the 96-residue chain is Glutamyl-tRNA(Gln) amidotransferase subunit C (96 aa).

Belongs to the GatC family. Heterotrimer of A, B and C subunits.

It catalyses the reaction L-glutamyl-tRNA(Gln) + L-glutamine + ATP + H2O = L-glutaminyl-tRNA(Gln) + L-glutamate + ADP + phosphate + H(+). The enzyme catalyses L-aspartyl-tRNA(Asn) + L-glutamine + ATP + H2O = L-asparaginyl-tRNA(Asn) + L-glutamate + ADP + phosphate + 2 H(+). Allows the formation of correctly charged Asn-tRNA(Asn) or Gln-tRNA(Gln) through the transamidation of misacylated Asp-tRNA(Asn) or Glu-tRNA(Gln) in organisms which lack either or both of asparaginyl-tRNA or glutaminyl-tRNA synthetases. The reaction takes place in the presence of glutamine and ATP through an activated phospho-Asp-tRNA(Asn) or phospho-Glu-tRNA(Gln). The chain is Glutamyl-tRNA(Gln) amidotransferase subunit C from Pseudomonas aeruginosa (strain ATCC 15692 / DSM 22644 / CIP 104116 / JCM 14847 / LMG 12228 / 1C / PRS 101 / PAO1).